Here is a 339-residue protein sequence, read N- to C-terminus: Nicotinate-nucleotide--dimethylbenzimidazole phosphoribosyltransferase (339 aa).

Residue E306 is the Proton acceptor of the active site.

Belongs to the CobT family.

It carries out the reaction 5,6-dimethylbenzimidazole + nicotinate beta-D-ribonucleotide = alpha-ribazole 5'-phosphate + nicotinate + H(+). It participates in nucleoside biosynthesis; alpha-ribazole biosynthesis; alpha-ribazole from 5,6-dimethylbenzimidazole: step 1/2. In terms of biological role, catalyzes the synthesis of alpha-ribazole-5'-phosphate from nicotinate mononucleotide (NAMN) and 5,6-dimethylbenzimidazole (DMB). The protein is Nicotinate-nucleotide--dimethylbenzimidazole phosphoribosyltransferase of Brucella abortus (strain S19).